Reading from the N-terminus, the 276-residue chain is Putative translation initiation factor eIF-2B subunit 2-like (276 aa).

It belongs to the eIF-2B alpha/beta/delta subunits family. As to quaternary structure, complex of two different subunits.

Its function is as follows. Catalyzes the exchange of initiation factor 2-bound GDP for GTP. The chain is Putative translation initiation factor eIF-2B subunit 2-like from Pyrococcus abyssi (strain GE5 / Orsay).